The following is a 199-amino-acid chain: Phosphoserine phosphatase RsbX (199 aa).

A PPM-type phosphatase domain is found at 11-198 (QTLVYQLNKE…DDLTYILGQL (188 aa)).

The catalysed reaction is O-phospho-L-serine + H2O = L-serine + phosphate. It catalyses the reaction O-phospho-D-serine + H2O = D-serine + phosphate. Its function is as follows. Negative regulator of sigma-B activity. Dephosphorylates RsbS. Plays a role both in maintaining low sigma-B activity during growth and in reestablishing prestress sigma-B activity after induction. Could have a negative feedback role by indirectly communicating sigma-B protein levels. The protein is Phosphoserine phosphatase RsbX (rsbX) of Bacillus subtilis (strain 168).